The following is a 257-amino-acid chain: Thiazole synthase (257 aa).

Lys96 (schiff-base intermediate with DXP) is an active-site residue. Residues Gly157, 184 to 185 (AG), and 206 to 207 (NT) each bind 1-deoxy-D-xylulose 5-phosphate.

This sequence belongs to the ThiG family. Homotetramer. Forms heterodimers with either ThiH or ThiS.

It localises to the cytoplasm. It catalyses the reaction [ThiS sulfur-carrier protein]-C-terminal-Gly-aminoethanethioate + 2-iminoacetate + 1-deoxy-D-xylulose 5-phosphate = [ThiS sulfur-carrier protein]-C-terminal Gly-Gly + 2-[(2R,5Z)-2-carboxy-4-methylthiazol-5(2H)-ylidene]ethyl phosphate + 2 H2O + H(+). It functions in the pathway cofactor biosynthesis; thiamine diphosphate biosynthesis. Catalyzes the rearrangement of 1-deoxy-D-xylulose 5-phosphate (DXP) to produce the thiazole phosphate moiety of thiamine. Sulfur is provided by the thiocarboxylate moiety of the carrier protein ThiS. In vitro, sulfur can be provided by H(2)S. The chain is Thiazole synthase from Bartonella quintana (strain Toulouse) (Rochalimaea quintana).